The sequence spans 1371 residues: DNA-directed RNA polymerase subunit beta (1371 aa).

Belongs to the RNA polymerase beta chain family. The RNAP catalytic core consists of 2 alpha, 1 beta, 1 beta' and 1 omega subunit. When a sigma factor is associated with the core the holoenzyme is formed, which can initiate transcription.

It catalyses the reaction RNA(n) + a ribonucleoside 5'-triphosphate = RNA(n+1) + diphosphate. Its function is as follows. DNA-dependent RNA polymerase catalyzes the transcription of DNA into RNA using the four ribonucleoside triphosphates as substrates. This chain is DNA-directed RNA polymerase subunit beta, found in Citrifermentans bemidjiense (strain ATCC BAA-1014 / DSM 16622 / JCM 12645 / Bem) (Geobacter bemidjiensis).